Here is a 224-residue protein sequence, read N- to C-terminus: ATP synthase subunit a (224 aa).

6 helical membrane-spanning segments follow: residues 17–37, 72–92, 99–119, 125–145, 170–190, and 195–215; these read LSLN…IYWL, IFIS…FPYI, LTLT…YGWI, MFAH…MVCI, LLLT…VTFL, and IALL…FAVL.

The protein belongs to the ATPase A chain family. F-type ATPases have 2 components, CF(1) - the catalytic core - and CF(0) - the membrane proton channel. CF(1) has five subunits: alpha(3), beta(3), gamma(1), delta(1), epsilon(1). CF(0) has three main subunits: a, b and c.

The protein localises to the mitochondrion inner membrane. In terms of biological role, mitochondrial membrane ATP synthase (F(1)F(0) ATP synthase or Complex V) produces ATP from ADP in the presence of a proton gradient across the membrane which is generated by electron transport complexes of the respiratory chain. F-type ATPases consist of two structural domains, F(1) - containing the extramembraneous catalytic core and F(0) - containing the membrane proton channel, linked together by a central stalk and a peripheral stalk. During catalysis, ATP synthesis in the catalytic domain of F(1) is coupled via a rotary mechanism of the central stalk subunits to proton translocation. Key component of the proton channel; it may play a direct role in the translocation of protons across the membrane. The sequence is that of ATP synthase subunit a (mt:ATPase6) from Drosophila simulans (Fruit fly).